Reading from the N-terminus, the 143-residue chain is Large ribosomal subunit protein uL11 (143 aa).

Belongs to the universal ribosomal protein uL11 family. As to quaternary structure, part of the ribosomal stalk of the 50S ribosomal subunit. Interacts with L10 and the large rRNA to form the base of the stalk. L10 forms an elongated spine to which L12 dimers bind in a sequential fashion forming a multimeric L10(L12)X complex. In terms of processing, one or more lysine residues are methylated.

In terms of biological role, forms part of the ribosomal stalk which helps the ribosome interact with GTP-bound translation factors. The polypeptide is Large ribosomal subunit protein uL11 (Acidovorax ebreus (strain TPSY) (Diaphorobacter sp. (strain TPSY))).